The following is a 197-amino-acid chain: Guanylate kinase (197 aa).

The 186-residue stretch at 6 to 191 folds into the Guanylate kinase-like domain; the sequence is SKLIILSGPS…CVAQIEKIIS (186 aa). 13–20 is an ATP binding site; sequence GPSGVGKG.

The protein belongs to the guanylate kinase family.

It localises to the cytoplasm. It carries out the reaction GMP + ATP = GDP + ADP. In terms of biological role, essential for recycling GMP and indirectly, cGMP. This is Guanylate kinase from Mesomycoplasma hyopneumoniae (strain 7448) (Mycoplasma hyopneumoniae).